Consider the following 47-residue polypeptide: uncharacterized protein (47 aa).

Residues 1-25 (MAHKCASAKLLSGIMALLFNGKSLL) form the signal peptide.

This is an uncharacterized protein from Saccharomyces cerevisiae (strain ATCC 204508 / S288c) (Baker's yeast).